A 311-amino-acid polypeptide reads, in one-letter code: Homeobox-leucine zipper protein ATHB-6 (311 aa).

The segment covering 1–10 (MMKRLSSSDS) has biased composition (polar residues). The interval 1–32 (MMKRLSSSDSVGGLISLCPTTSTDEQSPRRYG) is disordered. The interaction with ABI1 stretch occupies residues 1-43 (MMKRLSSSDSVGGLISLCPTTSTDEQSPRRYGGREFQSMLEGY). Residues 59–118 (LSEKKRRLSINQVKALEKNFELENKLEPERKVKLAQELGLQPRQVAVWFQNRRARWKTKQ) constitute a DNA-binding region (homeobox). Residues 119-154 (LEKDYGVLKTQYDSLRHNFDSLRRDNESLLQEISKL) are leucine-zipper. Residues 157-183 (KLNGGGGEEEEEENNAAVTTESDISVK) are disordered. An interaction with ABI1 region spans residues 218 to 311 (LRDLLPLKAA…HWYSTVDHWN (94 aa)).

It belongs to the HD-ZIP homeobox family. Class I subfamily. Interacts with ABI1. In terms of processing, phosphorylated by PKA. Reversible inactivation of the binding to DNA by phosphorylation. Widely expressed.

It is found in the nucleus. Transcription activator that may act as growth regulators in response to water deficit. Interacts with the core sequence 5'-CAATTATTA-3' of promoters in response to ABA and in an ABI1-dependent manner. Involved in the negative regulation of the ABA signaling pathway. The protein is Homeobox-leucine zipper protein ATHB-6 (ATHB-6) of Arabidopsis thaliana (Mouse-ear cress).